Reading from the N-terminus, the 207-residue chain is Outer-membrane lipoprotein LolB (207 aa).

An N-terminal signal peptide occupies residues 1-21 (MPTNTVRCLRLLPLASVLLAA). Cysteine 22 carries the N-palmitoyl cysteine lipid modification. Cysteine 22 carries the S-diacylglycerol cysteine lipid modification.

This sequence belongs to the LolB family. In terms of assembly, monomer.

It localises to the cell outer membrane. In terms of biological role, plays a critical role in the incorporation of lipoproteins in the outer membrane after they are released by the LolA protein. This is Outer-membrane lipoprotein LolB from Pectobacterium carotovorum subsp. carotovorum (strain PC1).